The primary structure comprises 111 residues: Large ribosomal subunit protein eL31 (111 aa).

The protein belongs to the eukaryotic ribosomal protein eL31 family.

This Encephalitozoon cuniculi (strain GB-M1) (Microsporidian parasite) protein is Large ribosomal subunit protein eL31 (RPL31).